The sequence spans 198 residues: Superoxide dismutase [Mn], mitochondrial (198 aa).

Mn(2+) is bound at residue His26. Tyr34 carries the 3'-nitrotyrosine modification. N6-acetyllysine; alternate occurs at positions 44 and 51. Lys44 and Lys51 each carry N6-succinyllysine; alternate. Mn(2+) is bound at residue His74. Lys90 bears the N6-acetyllysine mark. An N6-acetyllysine; alternate mark is found at Lys98 and Lys106. An N6-succinyllysine; alternate mark is found at Lys98 and Lys106. Mn(2+) contacts are provided by Asp159 and His163. Lys178 carries the N6-acetyllysine modification.

The protein belongs to the iron/manganese superoxide dismutase family. In terms of assembly, homotetramer. It depends on Mn(2+) as a cofactor. Nitrated under oxidative stress. Nitration coupled with oxidation inhibits the catalytic activity. Post-translationally, acetylation at Lys-98 decreases enzymatic activity. Deacetylated by SIRT3 upon exposure to ionizing radiations or after long fasting. In terms of processing, polyubiquitinated; leading to proteasomal degradation. Deubiquitinated by USP36 which increases protein stability.

The protein localises to the mitochondrion matrix. The enzyme catalyses 2 superoxide + 2 H(+) = H2O2 + O2. Its function is as follows. Destroys superoxide anion radicals which are normally produced within the cells and which are toxic to biological systems. In Callithrix jacchus (White-tufted-ear marmoset), this protein is Superoxide dismutase [Mn], mitochondrial (SOD2).